Reading from the N-terminus, the 180-residue chain is uncharacterized protein (180 aa).

The N-acetyltransferase domain maps to 45 to 180 (FVFSQVRTLD…GNRCAFWYAN (136 aa)).

It belongs to the acetyltransferase family. Ycf52 subfamily.

This is an uncharacterized protein from Prochlorococcus marinus (strain SARG / CCMP1375 / SS120).